The sequence spans 132 residues: MIVRTTAEITDTDRDITSEDGNWRSKRIILGGDKVGFSFHETTIKAGSVNEFHYANHVEAVWLVEGTGKLIDLDNDKVYELGPGSMYLLNGHERHRVEPETEMRMLCVFNPPVTGREVHDENGVYPLVEVPA.

The protein belongs to the ectoine synthase family.

It carries out the reaction (2S)-4-acetamido-2-aminobutanoate = L-ectoine + H2O. The protein operates within amine and polyamine biosynthesis; ectoine biosynthesis; L-ectoine from L-aspartate 4-semialdehyde: step 3/3. Its function is as follows. Catalyzes the circularization of gamma-N-acetyl-alpha,gamma-diaminobutyric acid (ADABA) to ectoine (1,4,5,6-tetrahydro-2-methyl-4-pyrimidine carboxylic acid), which is an excellent osmoprotectant. The polypeptide is L-ectoine synthase (Rhodococcus jostii (strain RHA1)).